The sequence spans 1098 residues: Platelet-derived growth factor receptor beta (1098 aa).

Positions 1–31 are cleaved as a signal peptide; it reads MGLPGVIPALVLRGQLLLSVLWLLGPQTSRG. Residues 32-531 lie on the Extracellular side of the membrane; sequence LVITPPGPEF…VVPHSLPFKV (500 aa). Ig-like C2-type domains follow at residues 33–119, 128–209, 213–308, 330–402, and 415–523; these read VITP…YIFV, PMDS…YSLQ, INVS…INIS, HRSR…HEDD, and PVRV…VTVV. N-linked (GlcNAc...) asparagine glycosylation is found at N44, N88, and N102. C53 and C99 are disulfide-bonded. A disulfide bond links C148 and C189. N214 carries an N-linked (GlcNAc...) asparagine glycan. C234 and C290 are disulfide-bonded. Residues N291, N306, N353, N370, N444, N467, and N478 are each glycosylated (N-linked (GlcNAc...) asparagine). C435 and C507 are joined by a disulfide. The helical transmembrane segment at 532-552 threads the bilayer; that stretch reads VVISAILALVVLTVISLIILI. Over 553–1098 the chain is Cytoplasmic; that stretch reads MLWQKKPRYE…PLAEAEDSFL (546 aa). 3 positions are modified to phosphotyrosine; by autocatalysis: Y561, Y578, and Y580. One can recognise a Protein kinase domain in the interval 599-961; that stretch reads LVLGRTLGSG…QLVLLLERLL (363 aa). ATP-binding positions include 605-613 and K633; that span reads LGSGAFGQV. Position 685 is a phosphotyrosine; by ABL1 and ABL2 (Y685). Y715, Y739, Y750, Y762, Y770, Y774, and Y777 each carry phosphotyrosine; by autocatalysis. Catalysis depends on D825, which acts as the Proton acceptor. Y856 is subject to Phosphotyrosine; by autocatalysis. Y933 and Y969 each carry phosphotyrosine; by ABL1 and ABL2. 2 positions are modified to phosphotyrosine; by autocatalysis: Y1008 and Y1020. The interval 1016-1098 is disordered; it reads SDNDYIIPLP…PLAEAEDSFL (83 aa). Polar residues predominate over residues 1042–1059; the sequence is SLASSTLNEVNTSSTISC. Low complexity predominate over residues 1062–1082; that stretch reads PLELQEEPQQAEPEAQLEQPQ.

Belongs to the protein kinase superfamily. Tyr protein kinase family. CSF-1/PDGF receptor subfamily. In terms of assembly, interacts with homodimeric PDGFB and PDGFD, and with heterodimers formed by PDGFA and PDGFB. May also interact with homodimeric PDGFC. Monomer in the absence of bound ligand. Interaction with homodimeric PDGFB, heterodimers formed by PDGFA and PDGFB or homodimeric PDGFD, leads to receptor dimerization, where both PDGFRA homodimers and heterodimers with PDGFRB are observed. Interacts with SH2B2/APS. Interacts directly (tyrosine phosphorylated) with SHB. Interacts (tyrosine phosphorylated) with PIK3R1 and RASA1. Interacts (tyrosine phosphorylated) with CBL. Interacts (tyrosine phosphorylated) with SRC and SRC family kinases. Interacts (tyrosine phosphorylated) with PIK3C2B, maybe indirectly. Interacts (tyrosine phosphorylated) with SHC1, GRB7, GRB10 and NCK1. Interaction with GRB2 is mediated by SHC1. Interacts (via C-terminus) with NHERF1. Post-translationally, autophosphorylated on tyrosine residues upon ligand binding. Autophosphorylation occurs in trans, i.e. one subunit of the dimeric receptor phosphorylates tyrosine residues on the other subunit. Phosphorylation at Tyr-578, and to a lesser degree, Tyr-580 is important for interaction with SRC. Phosphorylation at Tyr-715 is important for interaction with GRB2. Phosphorylation at Tyr-739 and Tyr-750 is important for interaction with PIK3R1. Phosphorylation at Tyr-750 is important for interaction with NCK1. Phosphorylation at Tyr-770 and Tyr-856 is important for interaction with RASA1/GAP. Phosphorylation at Tyr-856 is important for efficient phosphorylation of PLCG1 and PTPN11, resulting in increased phosphorylation of AKT1, MAPK1/ERK2 and/or MAPK3/ERK1, PDCD6IP/ALIX and STAM, and in increased cell proliferation. Phosphorylation at Tyr-1008 is important for interaction with PTPN11. Phosphorylation at Tyr-1008 and Tyr-1020 is important for interaction with PLCG1. Dephosphorylated by PTPRJ at Tyr-750, Tyr-856, Tyr-1008 and Tyr-1020. Dephosphorylated by PTPN2 at Tyr-578 and Tyr-1020. N-glycosylated. In terms of processing, ubiquitinated. After autophosphorylation, the receptor is polyubiquitinated, leading to its degradation. As to expression, weakly expressed in glomerular mesangial cells and interstitial cells. Up-regulated in areas of renal fibrosis. In mice with unilateral ureteral obstruction, increased expression in interstitial cells at day 4 and expression is markedly elevated at day 7 and is maximal at day 14.

It localises to the cell membrane. The protein localises to the cytoplasmic vesicle. Its subcellular location is the lysosome lumen. The catalysed reaction is L-tyrosyl-[protein] + ATP = O-phospho-L-tyrosyl-[protein] + ADP + H(+). With respect to regulation, present in an inactive conformation in the absence of bound ligand. Binding of PDGFB and/or PDGFD leads to dimerization and activation by autophosphorylation on tyrosine residues. Its function is as follows. Tyrosine-protein kinase that acts as a cell-surface receptor for homodimeric PDGFB and PDGFD and for heterodimers formed by PDGFA and PDGFB, and plays an essential role in the regulation of embryonic development, cell proliferation, survival, differentiation, chemotaxis and migration. Plays an essential role in blood vessel development by promoting proliferation, migration and recruitment of pericytes and smooth muscle cells to endothelial cells. Plays a role in the migration of vascular smooth muscle cells and the formation of neointima at vascular injury sites. Required for normal development of the cardiovascular system. Required for normal recruitment of pericytes (mesangial cells) in the kidney glomerulus, and for normal formation of a branched network of capillaries in kidney glomeruli. Promotes rearrangement of the actin cytoskeleton and the formation of membrane ruffles. Binding of its cognate ligands - homodimeric PDGFB, heterodimers formed by PDGFA and PDGFB or homodimeric PDGFD -leads to the activation of several signaling cascades; the response depends on the nature of the bound ligand and is modulated by the formation of heterodimers between PDGFRA and PDGFRB. Phosphorylates PLCG1, PIK3R1, PTPN11, RASA1/GAP, CBL, SHC1 and NCK1. Activation of PLCG1 leads to the production of the cellular signaling molecules diacylglycerol and inositol 1,4,5-trisphosphate, mobilization of cytosolic Ca(2+) and the activation of protein kinase C. Phosphorylation of PIK3R1, the regulatory subunit of phosphatidylinositol 3-kinase, leads to the activation of the AKT1 signaling pathway. Phosphorylation of SHC1, or of the C-terminus of PTPN11, creates a binding site for GRB2, resulting in the activation of HRAS, RAF1 and down-stream MAP kinases, including MAPK1/ERK2 and/or MAPK3/ERK1. Promotes phosphorylation and activation of SRC family kinases. Promotes phosphorylation of PDCD6IP/ALIX and STAM. Receptor signaling is down-regulated by protein phosphatases that dephosphorylate the receptor and its down-stream effectors, and by rapid internalization of the activated receptor. The polypeptide is Platelet-derived growth factor receptor beta (Pdgfrb) (Mus musculus (Mouse)).